The primary structure comprises 478 residues: Protein nucleotidyltransferase YdiU (478 aa).

ATP contacts are provided by glycine 84, glycine 86, arginine 87, lysine 107, aspartate 119, glycine 120, arginine 170, and arginine 177. Catalysis depends on aspartate 246, which acts as the Proton acceptor. Positions 247 and 256 each coordinate Mg(2+). An ATP-binding site is contributed by aspartate 256.

It belongs to the SELO family. Mg(2+) serves as cofactor. It depends on Mn(2+) as a cofactor.

The enzyme catalyses L-seryl-[protein] + ATP = 3-O-(5'-adenylyl)-L-seryl-[protein] + diphosphate. It catalyses the reaction L-threonyl-[protein] + ATP = 3-O-(5'-adenylyl)-L-threonyl-[protein] + diphosphate. It carries out the reaction L-tyrosyl-[protein] + ATP = O-(5'-adenylyl)-L-tyrosyl-[protein] + diphosphate. The catalysed reaction is L-histidyl-[protein] + UTP = N(tele)-(5'-uridylyl)-L-histidyl-[protein] + diphosphate. The enzyme catalyses L-seryl-[protein] + UTP = O-(5'-uridylyl)-L-seryl-[protein] + diphosphate. It catalyses the reaction L-tyrosyl-[protein] + UTP = O-(5'-uridylyl)-L-tyrosyl-[protein] + diphosphate. Functionally, nucleotidyltransferase involved in the post-translational modification of proteins. It can catalyze the addition of adenosine monophosphate (AMP) or uridine monophosphate (UMP) to a protein, resulting in modifications known as AMPylation and UMPylation. The protein is Protein nucleotidyltransferase YdiU of Shigella boydii serotype 4 (strain Sb227).